Reading from the N-terminus, the 128-residue chain is Small ribosomal subunit protein eS6 (128 aa).

It belongs to the eukaryotic ribosomal protein eS6 family.

The sequence is that of Small ribosomal subunit protein eS6 from Methanobrevibacter smithii (strain ATCC 35061 / DSM 861 / OCM 144 / PS).